The following is a 260-amino-acid chain: Trans-aconitate 2-methyltransferase (260 aa).

It belongs to the methyltransferase superfamily. Tam family.

It localises to the cytoplasm. The enzyme catalyses trans-aconitate + S-adenosyl-L-methionine = (E)-3-(methoxycarbonyl)pent-2-enedioate + S-adenosyl-L-homocysteine. In terms of biological role, catalyzes the S-adenosylmethionine monomethyl esterification of trans-aconitate. The protein is Trans-aconitate 2-methyltransferase of Methylobacterium radiotolerans (strain ATCC 27329 / DSM 1819 / JCM 2831 / NBRC 15690 / NCIMB 10815 / 0-1).